Consider the following 341-residue polypeptide: UDP-N-acetylenolpyruvoylglucosamine reductase (341 aa).

Residues 19–191 (MAVRAAHFCQ…TAVRFRLSRR (173 aa)) enclose the FAD-binding PCMH-type domain. R167 is an active-site residue. Catalysis depends on S241, which acts as the Proton donor. Residue E337 is part of the active site.

This sequence belongs to the MurB family. FAD serves as cofactor.

It localises to the cytoplasm. The enzyme catalyses UDP-N-acetyl-alpha-D-muramate + NADP(+) = UDP-N-acetyl-3-O-(1-carboxyvinyl)-alpha-D-glucosamine + NADPH + H(+). The protein operates within cell wall biogenesis; peptidoglycan biosynthesis. In terms of biological role, cell wall formation. In Chromobacterium violaceum (strain ATCC 12472 / DSM 30191 / JCM 1249 / CCUG 213 / NBRC 12614 / NCIMB 9131 / NCTC 9757 / MK), this protein is UDP-N-acetylenolpyruvoylglucosamine reductase.